A 102-amino-acid polypeptide reads, in one-letter code: Co-chaperonin GroES (102 aa).

This sequence belongs to the GroES chaperonin family. In terms of assembly, heptamer of 7 subunits arranged in a ring. Interacts with the chaperonin GroEL.

Its subcellular location is the cytoplasm. Together with the chaperonin GroEL, plays an essential role in assisting protein folding. The GroEL-GroES system forms a nano-cage that allows encapsulation of the non-native substrate proteins and provides a physical environment optimized to promote and accelerate protein folding. GroES binds to the apical surface of the GroEL ring, thereby capping the opening of the GroEL channel. The protein is Co-chaperonin GroES of Streptomyces avermitilis (strain ATCC 31267 / DSM 46492 / JCM 5070 / NBRC 14893 / NCIMB 12804 / NRRL 8165 / MA-4680).